We begin with the raw amino-acid sequence, 98 residues long: Keratinocyte differentiation-associated protein (98 aa).

An N-terminal signal peptide occupies residues 1-22; it reads MKIPILPIVALLSLLALHAAQG.

As to expression, ubiquitously expressed in stratified epithelium.

The protein resides in the secreted. In terms of biological role, may act as a soluble regulator of keratinocyte differentiation. May play an important role in embryonic skin morphogenesis. This Rattus norvegicus (Rat) protein is Keratinocyte differentiation-associated protein.